The sequence spans 355 residues: dTDP-D-glucose 4,6-dehydratase (355 aa).

Thr142 contributes to the substrate binding site. The active-site Proton donor is the Asp143. Catalysis depends on proton acceptor residues Glu144 and Tyr166.

It belongs to the NAD(P)-dependent epimerase/dehydratase family. dTDP-glucose dehydratase subfamily. NAD(+) is required as a cofactor.

It catalyses the reaction dTDP-alpha-D-glucose = dTDP-4-dehydro-6-deoxy-alpha-D-glucose + H2O. This chain is dTDP-D-glucose 4,6-dehydratase (Tgds), found in Mus musculus (Mouse).